The sequence spans 361 residues: Porphobilinogen deaminase (361 aa).

Cys265 bears the S-(dipyrrolylmethanemethyl)cysteine mark. Residues 341-361 (LPPSSNTPTPQPITPITTNNS) are disordered.

It belongs to the HMBS family. Dipyrromethane is required as a cofactor.

It catalyses the reaction 4 porphobilinogen + H2O = hydroxymethylbilane + 4 NH4(+). It participates in porphyrin-containing compound metabolism; protoporphyrin-IX biosynthesis; coproporphyrinogen-III from 5-aminolevulinate: step 2/4. Its function is as follows. Tetrapolymerization of the monopyrrole PBG into the hydroxymethylbilane pre-uroporphyrinogen in several discrete steps. In Debaryomyces hansenii (strain ATCC 36239 / CBS 767 / BCRC 21394 / JCM 1990 / NBRC 0083 / IGC 2968) (Yeast), this protein is Porphobilinogen deaminase (HEM3).